Consider the following 213-residue polypeptide: Dimethyl sulfoxide reductase transcriptional activator (213 aa).

The region spanning 155–206 is the HTH bat-type domain; the sequence is LTAKQREAALIAVHHGYYETPRRTELATLAEALGISKSALSQRLNAVEAKLA.

Its function is as follows. Involved in activating dmsEABCD gene expression related to dimethyl sulfoxide (DMSO) reductase. Required for anaerobic respiration on dimethyl sulfoxide (DMSO). The polypeptide is Dimethyl sulfoxide reductase transcriptional activator (Haloferax volcanii (strain ATCC 29605 / DSM 3757 / JCM 8879 / NBRC 14742 / NCIMB 2012 / VKM B-1768 / DS2) (Halobacterium volcanii)).